Reading from the N-terminus, the 870-residue chain is Ubiquitin-protein ligase E3A (870 aa).

The residue at position 8 (Ser8) is a Phosphoserine. The C4-type; atypical zinc-finger motif lies at 42-81 (CGNEACTNEFCASCPTFLRMDNNAAAIKALELYKINAKLC). Positions 171-180 (EELKSLQEKD) are enriched in basic and acidic residues. Residues 171–223 (EELKSLQEKDEDKDEDEKEKAACSAAAMEEDSEASSSRMGDSSQGDNNVQKLG) are disordered. The segment covering 208-220 (RMGDSSQGDNNVQ) has biased composition (polar residues). Position 213 is a phosphoserine (Ser213). The HECT domain maps to 542–870 (NPADLKKQLY…ITYAKGFGML (329 aa)). At Tyr654 the chain carries Phosphotyrosine; by ABL1. Cys838 functions as the Glycyl thioester intermediate in the catalytic mechanism.

As to quaternary structure, the active form is probably a homotrimer. Binds UBQLN1 and UBQLN2. Interacts with the 26S proteasome. Interacts with BPY2. Interacts with HIF1AN, MAPK6 and NEURL4; interaction with MAPK6 may be mediated by NEURL4. Interacts with the proteasomal subunit PSMD4. Interacts with BMAL1. Interacts with ARC. Interacts with ESR1 and WBP2. In terms of processing, phosphorylation at Tyr-654 by ABL1 impairs E3 ligase activity. As to expression, widely expressed. Most abundant in brain, heart and thymus.

The protein resides in the cytoplasm. Its subcellular location is the nucleus. The catalysed reaction is S-ubiquitinyl-[E2 ubiquitin-conjugating enzyme]-L-cysteine + [acceptor protein]-L-lysine = [E2 ubiquitin-conjugating enzyme]-L-cysteine + N(6)-ubiquitinyl-[acceptor protein]-L-lysine.. It participates in protein modification; protein ubiquitination. Functionally, E3 ubiquitin-protein ligase which accepts ubiquitin from an E2 ubiquitin-conjugating enzyme in the form of a thioester and transfers it to its substrates. Several substrates have been identified including the BMAL1, ARC, LAMTOR1, RAD23A and RAD23B, MCM7 (which is involved in DNA replication), annexin A1, the PML tumor suppressor, and the cell cycle regulator CDKN1B. Additionally, may function as a cellular quality control ubiquitin ligase by helping the degradation of the cytoplasmic misfolded proteins. Finally, UBE3A also promotes its own degradation in vivo. Plays an important role in the regulation of the circadian clock: involved in the ubiquitination of the core clock component BMAL1, leading to its proteasomal degradation. Acts as a regulator of synaptic development by mediating ubiquitination and degradation of ARC. Required for synaptic remodeling in neurons by mediating ubiquitination and degradation of LAMTOR1, thereby limiting mTORC1 signaling and activity-dependent synaptic remodeling. Synergizes with WBP2 in enhancing PGR activity. The sequence is that of Ubiquitin-protein ligase E3A from Mus musculus (Mouse).